Reading from the N-terminus, the 219-residue chain is 7-cyano-7-deazaguanine synthase (219 aa).

Residue 8 to 18 (LSGGMDSAVLL) participates in ATP binding. Cys185, Cys193, Cys196, and Cys199 together coordinate Zn(2+).

Belongs to the QueC family. Zn(2+) is required as a cofactor.

It catalyses the reaction 7-carboxy-7-deazaguanine + NH4(+) + ATP = 7-cyano-7-deazaguanine + ADP + phosphate + H2O + H(+). The protein operates within purine metabolism; 7-cyano-7-deazaguanine biosynthesis. In terms of biological role, catalyzes the ATP-dependent conversion of 7-carboxy-7-deazaguanine (CDG) to 7-cyano-7-deazaguanine (preQ(0)). This is 7-cyano-7-deazaguanine synthase from Desulfotalea psychrophila (strain LSv54 / DSM 12343).